Here is a 664-residue protein sequence, read N- to C-terminus: Macoilin (664 aa).

Helical transmembrane passes span T28–L48, A75–I95, V120–F140, and F154–V174. The segment covering Y252–K265 has biased composition (basic and acidic residues). Positions Y252–N274 are disordered. Position 305 is a phosphoserine (S305). Polar residues predominate over residues K320–S348. Residues K320–N375 form a disordered region. N324 is a glycosylation site (N-linked (GlcNAc...) asparagine). S332 carries the phosphoserine modification. Residues N340 and N452 are each glycosylated (N-linked (GlcNAc...) asparagine). The segment at T630–K664 is disordered. A phosphoserine mark is found at S631 and S634. Residue N655 is glycosylated (N-linked (GlcNAc...) asparagine).

Belongs to the macoilin family.

It localises to the rough endoplasmic reticulum membrane. It is found in the nucleus membrane. Functionally, plays a role in the regulation of neuronal activity. This is Macoilin from Rattus norvegicus (Rat).